We begin with the raw amino-acid sequence, 347 residues long: Ribosomal RNA small subunit methyltransferase C (347 aa).

The protein belongs to the methyltransferase superfamily. RsmC family. Monomer.

Its subcellular location is the cytoplasm. It catalyses the reaction guanosine(1207) in 16S rRNA + S-adenosyl-L-methionine = N(2)-methylguanosine(1207) in 16S rRNA + S-adenosyl-L-homocysteine + H(+). Specifically methylates the guanine in position 1207 of 16S rRNA in the 30S particle. In Yersinia pseudotuberculosis serotype IB (strain PB1/+), this protein is Ribosomal RNA small subunit methyltransferase C.